Consider the following 404-residue polypeptide: MQDILTVILAGGMGSRLSPLTDDRAKPAVPFGGKYRIIDFTLTNCLHSGLRKILVLTQYKSHSLQKHLRDGWSIFNPELGEYITSVPPQMRKGGKWYEGTADAIYHNLWLLERSEAKYVMVLSGDHIYRMDYAPMLEEHIANNAALTVACMDVNCKEAKAFGVMGIDERHRVHSFVEKPQNPPHLPNDPERSLVSMGIYIFSMEVLQQALIEDADDDASSHDFGKDIIPKLIDTGSVFAYKFCGSKGRVDKDCYWRDVGTIDSFYQANMDLLEPIPPMNLYQKDWGIRTYEPQYPPARTVSSGSGNEGIFINSIIANGVINSGGSVQHSIVSSNVRINDSATVVDSIIFDDVEIGEGCQLVNCIIDKHVKVPPYTQIGLNRLEDAQRFKISENGIVVVPESYQF.

Residues Tyr97, Gly162, 177-178, and Ser195 each bind alpha-D-glucose 1-phosphate; that span reads EK.

Belongs to the bacterial/plant glucose-1-phosphate adenylyltransferase family. In terms of assembly, homotetramer.

It catalyses the reaction alpha-D-glucose 1-phosphate + ATP + H(+) = ADP-alpha-D-glucose + diphosphate. The protein operates within glycan biosynthesis; glycogen biosynthesis. Involved in the biosynthesis of ADP-glucose, a building block required for the elongation reactions to produce glycogen. Catalyzes the reaction between ATP and alpha-D-glucose 1-phosphate (G1P) to produce pyrophosphate and ADP-Glc. This chain is Glucose-1-phosphate adenylyltransferase 2, found in Vibrio vulnificus (strain CMCP6).